The following is a 258-amino-acid chain: uncharacterized protein (258 aa).

The N-terminal stretch at 1–19 (MVGILPLCCSGCVPSLCCS) is a signal peptide. 3 consecutive transmembrane segments (helical) span residues 94–114 (GLLLPCLLGVGSWLLFNNWTG), 197–217 (CLILGIFLFCFVLAVIGLPYI), and 219–239 (PGLSLSVALLWQSLILLSSLV).

It localises to the membrane. This is an uncharacterized protein from Homo sapiens (Human).